The sequence spans 870 residues: Leucine--tRNA ligase (870 aa).

A 'HIGH' region motif is present at residues 42-52; that stretch reads PYPSGKLHMGH. The 'KMSKS' region signature appears at 629–633; that stretch reads KMSKS. K632 contributes to the ATP binding site.

Belongs to the class-I aminoacyl-tRNA synthetase family.

Its subcellular location is the cytoplasm. It carries out the reaction tRNA(Leu) + L-leucine + ATP = L-leucyl-tRNA(Leu) + AMP + diphosphate. The sequence is that of Leucine--tRNA ligase from Azotobacter vinelandii (strain DJ / ATCC BAA-1303).